The following is a 383-amino-acid chain: Putative F-box protein At4g09190 (383 aa).

The F-box domain maps to 16–67 (RSQREHIPLDLIVEIVSSLPAKSIVRFRSVSKLWSSIITTPDFTSSVVTRSL).

The polypeptide is Putative F-box protein At4g09190 (Arabidopsis thaliana (Mouse-ear cress)).